Consider the following 333-residue polypeptide: Autoinducer 2 import system permease protein LsrC (333 aa).

9 consecutive transmembrane segments (helical) span residues 14–34 (LIAI…YFSL), 39–59 (LVFS…LVML), 70–90 (IAGL…SLSV), 93–113 (LLTL…VTWL), 115–135 (IPAI…MLLL), 157–177 (LNIS…AWIL), 206–226 (IQII…IVFA), 252–272 (GISL…AFFL), and 284–304 (LPAW…LIFD).

It belongs to the binding-protein-dependent transport system permease family. AraH/RbsC subfamily. As to quaternary structure, the complex is composed of two ATP-binding proteins (LsrA), two transmembrane proteins (LsrC and LsrD) and a solute-binding protein (LsrB).

The protein localises to the cell inner membrane. Part of the ABC transporter complex LsrABCD involved in autoinducer 2 (AI-2) import. Probably responsible for the translocation of the substrate across the membrane. The protein is Autoinducer 2 import system permease protein LsrC (lsrC) of Photorhabdus laumondii subsp. laumondii (strain DSM 15139 / CIP 105565 / TT01) (Photorhabdus luminescens subsp. laumondii).